A 443-amino-acid chain; its full sequence is ATP-dependent protease ATPase subunit HslU (443 aa).

ATP is bound by residues isoleucine 18, 60–65 (GVGKTE), aspartate 256, glutamate 321, and arginine 393.

It belongs to the ClpX chaperone family. HslU subfamily. A double ring-shaped homohexamer of HslV is capped on each side by a ring-shaped HslU homohexamer. The assembly of the HslU/HslV complex is dependent on binding of ATP.

The protein localises to the cytoplasm. Functionally, ATPase subunit of a proteasome-like degradation complex; this subunit has chaperone activity. The binding of ATP and its subsequent hydrolysis by HslU are essential for unfolding of protein substrates subsequently hydrolyzed by HslV. HslU recognizes the N-terminal part of its protein substrates and unfolds these before they are guided to HslV for hydrolysis. This Wigglesworthia glossinidia brevipalpis protein is ATP-dependent protease ATPase subunit HslU.